A 259-amino-acid polypeptide reads, in one-letter code: Tryptophan synthase alpha chain (259 aa).

Catalysis depends on proton acceptor residues E35 and D46.

It belongs to the TrpA family. In terms of assembly, tetramer of two alpha and two beta chains.

It catalyses the reaction (1S,2R)-1-C-(indol-3-yl)glycerol 3-phosphate + L-serine = D-glyceraldehyde 3-phosphate + L-tryptophan + H2O. It functions in the pathway amino-acid biosynthesis; L-tryptophan biosynthesis; L-tryptophan from chorismate: step 5/5. The alpha subunit is responsible for the aldol cleavage of indoleglycerol phosphate to indole and glyceraldehyde 3-phosphate. The chain is Tryptophan synthase alpha chain from Methanococcus maripaludis (strain C5 / ATCC BAA-1333).